A 148-amino-acid polypeptide reads, in one-letter code: Glutaredoxin-C10 (148 aa).

A disordered region spans residues 16–55; that stretch reads TLDLTVHPPPPPPLPPPAPSTVSSSTASTSLSFDEEETSE. The segment covering 22–34 has biased composition (pro residues); sequence HPPPPPPLPPPAP. Residues 35–47 are compositionally biased toward low complexity; it reads STVSSSTASTSLS. The 93-residue stretch at 55–147 folds into the Glutaredoxin domain; sequence ESKIGRLISE…PRLVEVGALW (93 aa). Cys76 and Cys79 are oxidised to a cystine.

This sequence belongs to the glutaredoxin family. CC-type subfamily.

The protein resides in the cytoplasm. In terms of biological role, has a glutathione-disulfide oxidoreductase activity in the presence of NADPH and glutathione reductase. Reduces low molecular weight disulfides and proteins. The chain is Glutaredoxin-C10 (GRXC10) from Arabidopsis thaliana (Mouse-ear cress).